Reading from the N-terminus, the 252-residue chain is 14-3-3 protein 7 (252 aa).

It belongs to the 14-3-3 family. Homodimer.

This is 14-3-3 protein 7 (TFT7) from Solanum lycopersicum (Tomato).